A 329-amino-acid chain; its full sequence is Beta-ketoacyl-[acyl-carrier-protein] synthase III (329 aa).

Residues cysteine 113 and histidine 256 contribute to the active site. Residues 257–261 (QANQR) are ACP-binding. Asparagine 286 is a catalytic residue.

Belongs to the thiolase-like superfamily. FabH family. In terms of assembly, homodimer.

It localises to the cytoplasm. The enzyme catalyses malonyl-[ACP] + acetyl-CoA + H(+) = 3-oxobutanoyl-[ACP] + CO2 + CoA. Its pathway is lipid metabolism; fatty acid biosynthesis. Functionally, catalyzes the condensation reaction of fatty acid synthesis by the addition to an acyl acceptor of two carbons from malonyl-ACP. Catalyzes the first condensation reaction which initiates fatty acid synthesis and may therefore play a role in governing the total rate of fatty acid production. Possesses both acetoacetyl-ACP synthase and acetyl transacylase activities. Its substrate specificity determines the biosynthesis of branched-chain and/or straight-chain of fatty acids. In Natranaerobius thermophilus (strain ATCC BAA-1301 / DSM 18059 / JW/NM-WN-LF), this protein is Beta-ketoacyl-[acyl-carrier-protein] synthase III.